The chain runs to 249 residues: Expansin-A18 (249 aa).

An N-terminal signal peptide occupies residues 1-21 (MGNIVLQLLAILALCIAPARS). The 114-residue stretch at 41–154 (GGACGYGNLY…QQVKCWRSGG (114 aa)) folds into the Expansin-like EG45 domain. N-linked (GlcNAc...) asparagine glycosylation is present at asparagine 116. The region spanning 164–243 (YFELVLVTNM…GWSFGQTFST (80 aa)) is the Expansin-like CBD domain.

It belongs to the expansin family. Expansin A subfamily. In terms of tissue distribution, expressed in roots.

The protein localises to the secreted. It localises to the cell wall. The protein resides in the membrane. Functionally, may cause loosening and extension of plant cell walls by disrupting non-covalent bonding between cellulose microfibrils and matrix glucans. No enzymatic activity has been found. May be required for rapid internodal elongation in deepwater rice during submergence. The chain is Expansin-A18 (EXPA18) from Oryza sativa subsp. japonica (Rice).